The sequence spans 245 residues: Polyhedrin (245 aa).

The segment at 32–35 (KRKK) is nuclear localization signal.

This sequence belongs to the polyhedrin family.

The protein resides in the host nucleus. Major component of the virus occlusion bodies which are large proteinaceous structures termed polyhedra. These structures serve as the protective package for the virus particles outside the infected host and allow natural transmission of virus between insect hosts, assisting persistence in the environment. Forms the paracrystalline lattice of polyhedra and interacts with enveloped virions as well as other accessory molecules and structures to form a mature viral occlusion body. The sequence is that of Polyhedrin (PH) from Lepidoptera (butterflies and moths).